Consider the following 590-residue polypeptide: L-gulonolactone oxidase 5 (590 aa).

The N-terminal stretch at 1–31 (MAFGYSPSYCSFWRTLLGLYCLFTLVHTVIS) is a signal peptide. The FAD-binding PCMH-type domain occupies 60–242 (STCRAANVAY…SQVTFELQPM (183 aa)).

The protein belongs to the oxygen-dependent FAD-linked oxidoreductase family. FAD serves as cofactor.

It catalyses the reaction L-gulono-1,4-lactone + O2 = L-ascorbate + H2O2 + H(+). The protein operates within cofactor biosynthesis; L-ascorbate biosynthesis. Its function is as follows. Catalyzes the oxidation of L-gulono-1,4-lactone to ascorbic acid. L-gulono-1,4-lactone is oxidized to hydrogen peroxide and L-xylo-hexulonolactone which spontaneously isomerizes to L-ascorbate. This is L-gulonolactone oxidase 5 from Arabidopsis thaliana (Mouse-ear cress).